We begin with the raw amino-acid sequence, 380 residues long: MNVFKQQLEQLGAQNQYRSIPDLIHQGRYITRENRKMLNMSSNDYLGLASDENLRRSFLQQYGGNFPSFTSSSSRLLTGNFPIYTDLEELVAQRFQRESALLFNSGYHANLGILPALTTTKSLILADKFVHASMIDGIRLSRCAFSRYRHNDYEHLKNLLEKNVGKFDRTFIVTESVFSMDGDVADLKQLVQLKKQFPNTYLYVDEAHAIGVYGQNGLGIAERDNLIAEIDLLVGTFGKALASVGAYAVCNQVLKECLINQMRPLIFSTALPPFNVAWTYFIFERLPQFSKERSHLEQLSAFLRREVAHRTQIMPSQTCIVPYILGGNEAALAKAEYLQRQGYYCLPIRPPTVPKNTSRIRLSLTADMTTDEVRQFAVCL.

Arginine 18 contributes to the substrate binding site. Position 106–107 (106–107) interacts with pyridoxal 5'-phosphate; sequence GY. Residue histidine 131 coordinates substrate. Residues serine 179, 205–208, and 236–239 contribute to the pyridoxal 5'-phosphate site; these read DEAH and TFGK. Lysine 239 bears the N6-(pyridoxal phosphate)lysine mark. Threonine 352 provides a ligand contact to substrate.

The protein belongs to the class-II pyridoxal-phosphate-dependent aminotransferase family. BioF subfamily. As to quaternary structure, homodimer. Requires pyridoxal 5'-phosphate as cofactor.

The catalysed reaction is 6-carboxyhexanoyl-[ACP] + L-alanine + H(+) = (8S)-8-amino-7-oxononanoate + holo-[ACP] + CO2. It participates in cofactor biosynthesis; biotin biosynthesis. Catalyzes the decarboxylative condensation of pimeloyl-[acyl-carrier protein] and L-alanine to produce 8-amino-7-oxononanoate (AON), [acyl-carrier protein], and carbon dioxide. In Neisseria meningitidis serogroup C / serotype 2a (strain ATCC 700532 / DSM 15464 / FAM18), this protein is Putative 8-amino-7-oxononanoate synthase (bioF).